Reading from the N-terminus, the 142-residue chain is Large ribosomal subunit protein uL11 (142 aa).

It belongs to the universal ribosomal protein uL11 family. Part of the ribosomal stalk of the 50S ribosomal subunit. Interacts with L10 and the large rRNA to form the base of the stalk. L10 forms an elongated spine to which L12 dimers bind in a sequential fashion forming a multimeric L10(L12)X complex. Post-translationally, one or more lysine residues are methylated.

Functionally, forms part of the ribosomal stalk which helps the ribosome interact with GTP-bound translation factors. The polypeptide is Large ribosomal subunit protein uL11 (Buchnera aphidicola subsp. Acyrthosiphon pisum (strain APS) (Acyrthosiphon pisum symbiotic bacterium)).